Consider the following 190-residue polypeptide: Elongation factor P 2 (190 aa).

Belongs to the elongation factor P family.

The protein localises to the cytoplasm. It participates in protein biosynthesis; polypeptide chain elongation. Its function is as follows. Involved in peptide bond synthesis. Stimulates efficient translation and peptide-bond synthesis on native or reconstituted 70S ribosomes in vitro. Probably functions indirectly by altering the affinity of the ribosome for aminoacyl-tRNA, thus increasing their reactivity as acceptors for peptidyl transferase. This Chlamydia pneumoniae (Chlamydophila pneumoniae) protein is Elongation factor P 2 (efp2).